The sequence spans 333 residues: DNA-directed RNA polymerase subunit alpha (333 aa).

The alpha N-terminal domain (alpha-NTD) stretch occupies residues 1–234; that stretch reads MQISVNEFLT…QQLAAFVDLK (234 aa). Residues 248-333 form an alpha C-terminal domain (alpha-CTD) region; that stretch reads IDPILLRPVD…SLKKDDKATA (86 aa).

It belongs to the RNA polymerase alpha chain family. As to quaternary structure, homodimer. The RNAP catalytic core consists of 2 alpha, 1 beta, 1 beta' and 1 omega subunit. When a sigma factor is associated with the core the holoenzyme is formed, which can initiate transcription.

It carries out the reaction RNA(n) + a ribonucleoside 5'-triphosphate = RNA(n+1) + diphosphate. DNA-dependent RNA polymerase catalyzes the transcription of DNA into RNA using the four ribonucleoside triphosphates as substrates. In Pseudomonas fluorescens (strain ATCC BAA-477 / NRRL B-23932 / Pf-5), this protein is DNA-directed RNA polymerase subunit alpha.